A 287-amino-acid polypeptide reads, in one-letter code: Taxis protein CheF2 (287 aa).

In terms of assembly, interacts with chemotaxis (Che) proteins as well as flagella accessory (Fla) proteins.

Involved in taxis signal transduction. This chain is Taxis protein CheF2 (cheF2), found in Halobacterium salinarum (strain ATCC 29341 / DSM 671 / R1).